The following is a 62-amino-acid chain: Conotoxin Pn-014 (62 aa).

Positions 1 to 22 (MRCLPVFVILLLLIASAPSVDA) are cleaved as a signal peptide. Positions 23–48 (RPKTKDDIPLVSFQDHAKRILQTFES) are excised as a propeptide. Trp-61 is modified (tryptophan amide).

This sequence belongs to the conotoxin T superfamily. Contains 2 disulfide bonds that can be either 'C1-C3, C2-C4' or 'C1-C4, C2-C3', since these disulfide connectivities have been observed for conotoxins with cysteine framework V (for examples, see AC P0DQQ7 and AC P81755). As to expression, expressed by the venom duct.

It localises to the secreted. The chain is Conotoxin Pn-014 from Conus pennaceus (Feathered cone).